Reading from the N-terminus, the 409-residue chain is Argininosuccinate synthase (409 aa).

ATP contacts are provided by residues 8-16 (AYSGGLDTS) and alanine 34. Residue tyrosine 85 coordinates L-citrulline. Glycine 115 contacts ATP. Threonine 117, asparagine 121, and aspartate 122 together coordinate L-aspartate. Position 121 (asparagine 121) interacts with L-citrulline. 5 residues coordinate L-citrulline: arginine 125, serine 178, serine 187, glutamate 268, and tyrosine 280.

It belongs to the argininosuccinate synthase family. Type 1 subfamily. Homotetramer.

It localises to the cytoplasm. The catalysed reaction is L-citrulline + L-aspartate + ATP = 2-(N(omega)-L-arginino)succinate + AMP + diphosphate + H(+). It participates in amino-acid biosynthesis; L-arginine biosynthesis; L-arginine from L-ornithine and carbamoyl phosphate: step 2/3. This is Argininosuccinate synthase from Thermotoga petrophila (strain ATCC BAA-488 / DSM 13995 / JCM 10881 / RKU-1).